A 149-amino-acid chain; its full sequence is MRPFGEAKFLSGHQTLQLMRKKALWSKGKRVRCHTPCLPKVPRGRARRSGATTREQSPHRQGDRRRPSQGTSRPTGKTGETREGNPIGSQRIHSTCSPTDFIFLILESGGKGSLFCNEKKKRSRFDSAQPNDTSNTNDLCLECVARSLF.

The tract at residues 34 to 94 (HTPCLPKVPR…NPIGSQRIHS (61 aa)) is disordered. Over residues 56 to 66 (QSPHRQGDRRR) the composition is skewed to basic and acidic residues.

It localises to the mitochondrion. This is an uncharacterized protein from Arabidopsis thaliana (Mouse-ear cress).